The chain runs to 109 residues: Probable WRKY transcription factor 43 (109 aa).

The segment at residues 24–89 (SDADILDDGY…YEGIHNHPCE (66 aa)) is a DNA-binding region (WRKY).

Belongs to the WRKY group II-c family.

It localises to the nucleus. In terms of biological role, transcription factor. Interacts specifically with the W box (5'-(T)TGAC[CT]-3'), a frequently occurring elicitor-responsive cis-acting element. In Arabidopsis thaliana (Mouse-ear cress), this protein is Probable WRKY transcription factor 43 (WRKY43).